Here is a 95-residue protein sequence, read N- to C-terminus: Cliotide T1 (95 aa).

The cyclopeptide (Gly-Asn) cross-link spans 1-30 (GIPCGESCVFIPCITGAIGCSCKSKVCYRN). 3 cysteine pairs are disulfide-bonded: cysteine 4/cysteine 20, cysteine 8/cysteine 22, and cysteine 13/cysteine 27. A propeptide spans 31–95 (HVIAAEAKTM…KDHLKMSITN (65 aa)) (removed in mature form).

Post-translationally, contains 3 disulfide bonds. In terms of processing, this is a cyclic peptide. Expressed in flower, stem, shoot, root, leaf, seed, pod and nodule (at protein level).

In terms of biological role, probably participates in a plant defense mechanism. Active against Gram-negative bacteria E.coli ATCC 700926 (MIC=1.1 uM), K.pneumoniae ATTC 13883 (MIC=2.7 uM) and P.aeruginosa ATCC 39018 (MIC=4.7 uM). Has hemolytic and cytotoxic activity. The protein is Cliotide T1 of Clitoria ternatea (Butterfly pea).